Here is a 421-residue protein sequence, read N- to C-terminus: Ribulose bisphosphate carboxylase large chain (421 aa).

Positions 68 and 118 each coordinate substrate. Lys-120 acts as the Proton acceptor in catalysis. Residue Lys-122 participates in substrate binding. Mg(2+) is bound by residues Lys-146, Asp-148, and Glu-149. Residue Lys-146 is modified to N6-carboxylysine. Catalysis depends on His-239, which acts as the Proton acceptor. 3 residues coordinate substrate: Arg-240, His-272, and Ser-324.

This sequence belongs to the RuBisCO large chain family. Type I subfamily. As to quaternary structure, heterohexadecamer of 8 large chains and 8 small chains; disulfide-linked. The disulfide link is formed within the large subunit homodimers. Requires Mg(2+) as cofactor. The disulfide bond which can form in the large chain dimeric partners within the hexadecamer appears to be associated with oxidative stress and protein turnover.

It localises to the plastid. Its subcellular location is the chloroplast. The enzyme catalyses 2 (2R)-3-phosphoglycerate + 2 H(+) = D-ribulose 1,5-bisphosphate + CO2 + H2O. The catalysed reaction is D-ribulose 1,5-bisphosphate + O2 = 2-phosphoglycolate + (2R)-3-phosphoglycerate + 2 H(+). RuBisCO catalyzes two reactions: the carboxylation of D-ribulose 1,5-bisphosphate, the primary event in carbon dioxide fixation, as well as the oxidative fragmentation of the pentose substrate in the photorespiration process. Both reactions occur simultaneously and in competition at the same active site. The protein is Ribulose bisphosphate carboxylase large chain (rbcL) of Aegilops crassa (Persian goatgrass).